The primary structure comprises 276 residues: Dermonecrotic toxin LspiSicTox-betaIE4ii (276 aa).

H5 is an active-site residue. Residues E25 and D27 each coordinate Mg(2+). H41 acts as the Nucleophile in catalysis. 2 cysteine pairs are disulfide-bonded: C45–C51 and C47–C189. D85 provides a ligand contact to Mg(2+).

The protein belongs to the arthropod phospholipase D family. Class II subfamily. It depends on Mg(2+) as a cofactor. In terms of tissue distribution, expressed by the venom gland.

It is found in the secreted. The catalysed reaction is an N-(acyl)-sphingosylphosphocholine = an N-(acyl)-sphingosyl-1,3-cyclic phosphate + choline. The enzyme catalyses an N-(acyl)-sphingosylphosphoethanolamine = an N-(acyl)-sphingosyl-1,3-cyclic phosphate + ethanolamine. It catalyses the reaction a 1-acyl-sn-glycero-3-phosphocholine = a 1-acyl-sn-glycero-2,3-cyclic phosphate + choline. It carries out the reaction a 1-acyl-sn-glycero-3-phosphoethanolamine = a 1-acyl-sn-glycero-2,3-cyclic phosphate + ethanolamine. Functionally, dermonecrotic toxins cleave the phosphodiester linkage between the phosphate and headgroup of certain phospholipids (sphingolipid and lysolipid substrates), forming an alcohol (often choline) and a cyclic phosphate. This toxin acts on sphingomyelin (SM). It may also act on ceramide phosphoethanolamine (CPE), lysophosphatidylcholine (LPC) and lysophosphatidylethanolamine (LPE), but not on lysophosphatidylserine (LPS), and lysophosphatidylglycerol (LPG). It acts by transphosphatidylation, releasing exclusively cyclic phosphate products as second products. Induces dermonecrosis, hemolysis, increased vascular permeability, edema, inflammatory response, and platelet aggregation. The sequence is that of Dermonecrotic toxin LspiSicTox-betaIE4ii from Loxosceles spinulosa (Recluse spider).